Here is a 134-residue protein sequence, read N- to C-terminus: Putative pre-16S rRNA nuclease (134 aa).

The protein belongs to the YqgF nuclease family.

The protein resides in the cytoplasm. Its function is as follows. Could be a nuclease involved in processing of the 5'-end of pre-16S rRNA. This is Putative pre-16S rRNA nuclease from Helicobacter pylori (strain J99 / ATCC 700824) (Campylobacter pylori J99).